Consider the following 415-residue polypeptide: uncharacterized protein (415 aa).

H88 provides a ligand contact to Zn(2+). The active site involves D90. D121 serves as a coordination point for Zn(2+). E155 acts as the Proton acceptor in catalysis. Residues E156, D185, and H392 each coordinate Zn(2+).

It belongs to the peptidase M20A family. Zn(2+) is required as a cofactor. It depends on Co(2+) as a cofactor.

This is an uncharacterized protein from Methanococcus maripaludis (strain DSM 14266 / JCM 13030 / NBRC 101832 / S2 / LL).